The sequence spans 155 residues: Small ribosomal subunit protein uS7cz/uS7cy (155 aa).

This sequence belongs to the universal ribosomal protein uS7 family. Part of the 30S ribosomal subunit.

Its subcellular location is the plastid. The protein resides in the chloroplast. One of the primary rRNA binding proteins, it binds directly to 16S rRNA where it nucleates assembly of the head domain of the 30S subunit. The chain is Small ribosomal subunit protein uS7cz/uS7cy (rps7-A) from Nymphaea alba (White water-lily).